The chain runs to 316 residues: Apolipoprotein E (316 aa).

Residues 1–18 (MKVLWVALVITLLAGCQA) form the signal peptide. Tandem repeats lie at residues 79-100 (VLMD…GQLG), 101-122 (PIAQ…ARLA), 123-144 (SDME…AMMG), 145-166 (QTTD…KRLL), 167-188 (RDAE…EGSE), 189-210 (RSVS…VRAA), 211-232 (TVGT…QKLR), and 233-254 (GRME…EQLE). The tract at residues 79-254 (VLMDETMKEV…HLEEMREQLE (176 aa)) is 8 X 22 AA approximate tandem repeats. Position 142 is a methionine sulfoxide (methionine 142). The tract at residues 157–167 (HLRKLRKRLLR) is LDL and other lipoprotein receptors binding. 161-164 (LRKR) lines the heparin pocket. The lipid-binding and lipoprotein association stretch occupies residues 209 to 289 (AATVGTLASQ…SWFEPLVEDM (81 aa)). 228–235 (HQKLRGRM) provides a ligand contact to heparin. A homooligomerization region spans residues 265-316 (SQMRLQAEAFQARLKSWFEPLVEDMQRQWAGLVEKVQLAMATSPTSAPIENS). Residues 277–289 (RLKSWFEPLVEDM) form a specificity for association with VLDL region.

This sequence belongs to the apolipoprotein A1/A4/E family. In terms of assembly, homotetramer. May interact with ABCA1; functionally associated with ABCA1 in the biogenesis of HDLs. May interact with APP/A4 amyloid-beta peptide; the interaction is extremely stable in vitro but its physiological significance is unclear. May interact with MAPT. May interact with MAP2. In the cerebrospinal fluid, interacts with secreted SORL1. Interacts with PMEL; this allows the loading of PMEL luminal fragment on ILVs to induce fibril nucleation. In terms of processing, APOE exists as multiple glycosylated and sialylated glycoforms within cells and in plasma. The extent of glycosylation and sialylation are tissue and context specific. Glycated in plasma VLDL. Post-translationally, phosphorylated by FAM20C in the extracellular medium.

The protein resides in the secreted. Its subcellular location is the extracellular space. The protein localises to the extracellular matrix. It is found in the extracellular vesicle. It localises to the endosome. The protein resides in the multivesicular body. APOE is an apolipoprotein, a protein associating with lipid particles, that mainly functions in lipoprotein-mediated lipid transport between organs via the plasma and interstitial fluids. APOE is a core component of plasma lipoproteins and is involved in their production, conversion and clearance. Apolipoproteins are amphipathic molecules that interact both with lipids of the lipoprotein particle core and the aqueous environment of the plasma. As such, APOE associates with chylomicrons, chylomicron remnants, very low density lipoproteins (VLDL) and intermediate density lipoproteins (IDL) but shows a preferential binding to high-density lipoproteins (HDL). It also binds a wide range of cellular receptors including the LDL receptor/LDLR and the very low-density lipoprotein receptor/VLDLR that mediate the cellular uptake of the APOE-containing lipoprotein particles. Finally, APOE also has a heparin-binding activity and binds heparan-sulfate proteoglycans on the surface of cells, a property that supports the capture and the receptor-mediated uptake of APOE-containing lipoproteins by cells. This is Apolipoprotein E (APOE) from Orcinus orca (Killer whale).